The sequence spans 381 residues: Putative glutamate--cysteine ligase 2 (381 aa).

It belongs to the glutamate--cysteine ligase type 2 family. YbdK subfamily.

The catalysed reaction is L-cysteine + L-glutamate + ATP = gamma-L-glutamyl-L-cysteine + ADP + phosphate + H(+). ATP-dependent carboxylate-amine ligase which exhibits weak glutamate--cysteine ligase activity. The sequence is that of Putative glutamate--cysteine ligase 2 from Polaromonas naphthalenivorans (strain CJ2).